A 282-amino-acid polypeptide reads, in one-letter code: Endonuclease V (282 aa).

Positions 52 and 126 each coordinate Mg(2+). A disordered region spans residues 250-282 (SLGLPGPPTPRSPKAQRPVACPKGDSGESSALC).

It belongs to the endonuclease V family. As to quaternary structure, monomer. Interacts with PABPC1; the interaction is RNA-dependent and stimulates ENDOV activity. It depends on Mg(2+) as a cofactor.

It localises to the cytoplasm. It is found in the nucleus. Its subcellular location is the nucleolus. The protein localises to the stress granule. Its activity is regulated as follows. Inhibited by normal intracellular concentrations of ATP. In terms of biological role, endoribonuclease that specifically cleaves inosine-containing RNAs: cleaves RNA at the second phosphodiester bond 3' to inosine. Active against both single-stranded and double-stranded RNAs. Has strong preference for single-stranded RNAs (ssRNAs) toward double-stranded RNAs (dsRNAs). Cleaves mRNAs and tRNAs containing inosine. Also able to cleave structure-specific dsRNA substrates containing the specific sites 5'-IIUI-3' and 5'-UIUU-3'. Inosine is present in a number of RNAs following editing; the function of inosine-specific endoribonuclease is still unclear: it could either play a regulatory role in edited RNAs, or be involved in antiviral response by removing the hyperedited long viral dsRNA genome that has undergone A-to-I editing. Binds branched DNA structures. Functionally, endoribonuclease that specifically cleaves inosine-containing RNAs: cleaves RNA at the second phosphodiester bond 3' to inosine. Active against both single-stranded and double-stranded RNAs. Cleaves tRNAs containing inosine. The chain is Endonuclease V (ENDOV) from Homo sapiens (Human).